Consider the following 219-residue polypeptide: Proteasome subunit beta type-9 (219 aa).

The propeptide at 1 to 20 (MLRAGAPTGDLPRAGEVHTG) is removed in mature form. The active-site Nucleophile is the threonine 21. An N6-acetyllysine mark is found at lysine 53 and lysine 109.

It belongs to the peptidase T1B family. The 26S proteasome consists of a 20S proteasome core and two 19S regulatory subunits. The 20S proteasome core is composed of 28 subunits that are arranged in four stacked rings, resulting in a barrel-shaped structure. The two end rings are each formed by seven alpha subunits, and the two central rings are each formed by seven beta subunits. The catalytic chamber with the active sites is on the inside of the barrel. Component of the immunoproteasome, where it displaces the equivalent housekeeping subunit PSMB6. Component of the spermatoproteasome, a form of the proteasome specifically found in testis. In terms of assembly, (Microbial infection) Interacts with HIV-1 TAT protein. Post-translationally, autocleaved. The resulting N-terminal Thr residue of the mature subunit is responsible for the nucleophile proteolytic activity.

Its subcellular location is the cytoplasm. It localises to the nucleus. The enzyme catalyses Cleavage of peptide bonds with very broad specificity.. Its function is as follows. The proteasome is a multicatalytic proteinase complex which is characterized by its ability to cleave peptides with Arg, Phe, Tyr, Leu, and Glu adjacent to the leaving group at neutral or slightly basic pH. The proteasome has an ATP-dependent proteolytic activity. This subunit is involved in antigen processing to generate class I binding peptides. Replacement of PSMB6 by PSMB9 increases the capacity of the immunoproteasome to cleave model peptides after hydrophobic and basic residues. This is Proteasome subunit beta type-9 (PSMB9) from Homo sapiens (Human).